Reading from the N-terminus, the 420-residue chain is Histidine--tRNA ligase (420 aa).

It belongs to the class-II aminoacyl-tRNA synthetase family. Homodimer.

The protein localises to the cytoplasm. The catalysed reaction is tRNA(His) + L-histidine + ATP = L-histidyl-tRNA(His) + AMP + diphosphate + H(+). The chain is Histidine--tRNA ligase from Nitrosomonas europaea (strain ATCC 19718 / CIP 103999 / KCTC 2705 / NBRC 14298).